A 100-amino-acid polypeptide reads, in one-letter code: uncharacterized protein (100 aa).

A run of 2 helical transmembrane segments spans residues 1 to 21 and 54 to 74; these read MLVLVFLIGLSACFYVYYKVK and MILFHSVLTLVIGGIFIVIGA.

The protein localises to the cell membrane. This is an uncharacterized protein from Bacillus subtilis (strain 168).